A 2320-amino-acid chain; its full sequence is Sperm-associated antigen 17 (2320 aa).

2 stretches are compositionally biased toward basic and acidic residues: residues 139–171 (DQQR…EKKV) and 199–210 (RRGEDDEAKSYI). 11 disordered regions span residues 139 to 211 (DQQR…SYID), 388 to 407 (IPEP…KAQY), 682 to 739 (AEQD…SMDQ), 894 to 928 (SASK…EKDK), 950 to 1001 (EERL…AKTL), 1084 to 1118 (KEKE…EKVK), 1191 to 1221 (QGKG…EKKN), 1334 to 1367 (SSPD…KSET), 1393 to 1416 (DIIP…TTTP), 1983 to 2028 (KEAS…YENV), and 2080 to 2101 (TKES…EEPD). Polar residues predominate over residues 703–720 (VTGSTSNSTKPWNSSNRQ). Positions 865–965 (EEAKYQEAKM…EKKAEKKGKD (101 aa)) form a coiled coil. Composition is skewed to basic and acidic residues over residues 914 to 928 (ELSD…EKDK) and 950 to 999 (EERL…EPAK). Over residues 1090-1103 (NSEEEEEEEEEKEE) the composition is skewed to acidic residues. Composition is skewed to basic and acidic residues over residues 1104 to 1118 (VEEK…EKVK) and 1203 to 1221 (KHKD…EKKN). Composition is skewed to polar residues over residues 2012–2028 (VNKS…YENV) and 2082–2094 (ESVS…NVTR).

Interacts (via the C-terminus) with SPAG6; the interaction probably occurs on polymerized microtubules. In terms of tissue distribution, highly expressed in testis, round spermatids, testicular sperm, epididymal sperm and in condensing spermatids (at protein level). Expressed in organs that contain cilia-bearing cells including brain, oviduct, lung, and uterus. Expressed in articular cartilage and bone.

Its subcellular location is the cytoplasm. The protein resides in the cytoskeleton. The protein localises to the flagellum axoneme. It is found in the cytoplasmic vesicle. It localises to the secretory vesicle. Its subcellular location is the acrosome. The protein resides in the golgi apparatus. Its function is as follows. Component of the central pair apparatus of ciliary axonemes. Plays a critical role in the function and structure of motile cilia. May play a role in endochondral bone formation, most likely because of a function in primary cilia of chondrocytes and osteoblasts. Essential for normal spermatogenesis and male fertility. Required for normal manchette structure, transport of proteins along the manchette microtubules and formation of the sperm head and flagellum. Essential for sperm flagellum development and proper assembly of the respiratory motile cilia central pair apparatus, but not the brain ependymal cilia. This Mus musculus (Mouse) protein is Sperm-associated antigen 17 (Spag17).